The chain runs to 518 residues: Chromosomal replication initiator protein DnaA (518 aa).

Residues 1–76 (METDGGDFPS…RALSEAYGSP (76 aa)) are domain I, interacts with DnaA modulators. The domain II stretch occupies residues 76 to 176 (PIRLAVTVDP…RRPTTRIENS (101 aa)). Positions 91–174 (LTPERTGEHS…QPRRPTTRIE (84 aa)) are disordered. Basic and acidic residues predominate over residues 124–135 (DGLHLDERRSGS). Over residues 136–147 (LEEDSPLDDSDP) the composition is skewed to acidic residues. Positions 177–393 (RLNPKYIFET…GALIRVTAFA (217 aa)) are domain III, AAA+ region. ATP contacts are provided by G221, G223, K224, and T225. A domain IV, binds dsDNA region spans residues 394–518 (SLNRQPVDMQ…TNRIKKQSGA (125 aa)).

It belongs to the DnaA family. Oligomerizes as a right-handed, spiral filament on DNA at oriC.

The protein resides in the cytoplasm. Plays an essential role in the initiation and regulation of chromosomal replication. ATP-DnaA binds to the origin of replication (oriC) to initiate formation of the DNA replication initiation complex once per cell cycle. Binds the DnaA box (a 9 base pair repeat at the origin) and separates the double-stranded (ds)DNA. Forms a right-handed helical filament on oriC DNA; dsDNA binds to the exterior of the filament while single-stranded (ss)DNA is stabiized in the filament's interior. The ATP-DnaA-oriC complex binds and stabilizes one strand of the AT-rich DNA unwinding element (DUE), permitting loading of DNA polymerase. After initiation quickly degrades to an ADP-DnaA complex that is not apt for DNA replication. Binds acidic phospholipids. The protein is Chromosomal replication initiator protein DnaA of Kineococcus radiotolerans (strain ATCC BAA-149 / DSM 14245 / SRS30216).